The following is a 129-amino-acid chain: Phosphoribosyl-AMP cyclohydrolase (129 aa).

Asp-85 contacts Mg(2+). A Zn(2+)-binding site is contributed by Cys-86. Residues Asp-87 and Asp-89 each contribute to the Mg(2+) site. Cys-102 and Cys-109 together coordinate Zn(2+).

This sequence belongs to the PRA-CH family. Homodimer. It depends on Mg(2+) as a cofactor. Zn(2+) serves as cofactor.

Its subcellular location is the cytoplasm. It catalyses the reaction 1-(5-phospho-beta-D-ribosyl)-5'-AMP + H2O = 1-(5-phospho-beta-D-ribosyl)-5-[(5-phospho-beta-D-ribosylamino)methylideneamino]imidazole-4-carboxamide. It functions in the pathway amino-acid biosynthesis; L-histidine biosynthesis; L-histidine from 5-phospho-alpha-D-ribose 1-diphosphate: step 3/9. Catalyzes the hydrolysis of the adenine ring of phosphoribosyl-AMP. The protein is Phosphoribosyl-AMP cyclohydrolase of Methanococcus maripaludis (strain C5 / ATCC BAA-1333).